Consider the following 132-residue polypeptide: Small ribosomal subunit protein uS8 (132 aa).

Belongs to the universal ribosomal protein uS8 family. Part of the 30S ribosomal subunit. Contacts proteins S5 and S12.

Functionally, one of the primary rRNA binding proteins, it binds directly to 16S rRNA central domain where it helps coordinate assembly of the platform of the 30S subunit. In Clostridium perfringens (strain ATCC 13124 / DSM 756 / JCM 1290 / NCIMB 6125 / NCTC 8237 / Type A), this protein is Small ribosomal subunit protein uS8.